Reading from the N-terminus, the 854-residue chain is Rod cGMP-specific 3',5'-cyclic phosphodiesterase subunit beta (854 aa).

Residue S2 is modified to N-acetylserine. GAF domains lie at N71–L220 and D252–V429. The 334-residue stretch at D481 to Y814 folds into the PDEase domain. Residue H557 is the Proton donor of the active site. A divalent metal cation contacts are provided by H561, H597, D598, and D718. A lipid anchor (S-geranylgeranyl cysteine) is attached at C851. The propeptide at C852–L854 is removed in mature form.

This sequence belongs to the cyclic nucleotide phosphodiesterase family. In terms of assembly, oligomer composed of two catalytic chains (alpha and beta), an inhibitory chain (gamma) and the delta chain. It depends on a divalent metal cation as a cofactor.

Its subcellular location is the membrane. It is found in the cell projection. It localises to the cilium. The protein resides in the photoreceptor outer segment. The enzyme catalyses 3',5'-cyclic GMP + H2O = GMP + H(+). In terms of biological role, rod-specific cGMP phosphodiesterase that catalyzes the hydrolysis of 3',5'-cyclic GMP. Necessary for the formation of a functional phosphodiesterase holoenzyme. Involved in retinal circadian rhythm photoentrainment via modulation of UVA and orange light-induced phase-shift of the retina clock. May participate in processes of transmission and amplification of the visual signal. In Homo sapiens (Human), this protein is Rod cGMP-specific 3',5'-cyclic phosphodiesterase subunit beta.